Reading from the N-terminus, the 192-residue chain is Putative ripening-related protein 2 (192 aa).

The N-terminal stretch at 1 to 26 is a signal peptide; it reads MATTNCLLALAIAGLVLVSLPGLSRG.

Belongs to the kiwellin family.

Its subcellular location is the secreted. This is Putative ripening-related protein 2 from Oryza sativa subsp. japonica (Rice).